A 60-amino-acid polypeptide reads, in one-letter code: MKLTCVLIVAVLILTACQVIAADGWFGEESSCWWCTGQNKCCEEAQVCQSVNYACPPARR.

A signal peptide spans 1–22 (MKLTCVLIVAVLILTACQVIAA). 3 cysteine pairs are disulfide-bonded: Cys32-Cys42, Cys35-Cys48, and Cys41-Cys55.

Belongs to the conotoxin O1 superfamily. Expressed by the venom duct.

It is found in the secreted. Probable neurotoxin. This is Conotoxin Cal6.20 from Californiconus californicus (California cone).